We begin with the raw amino-acid sequence, 494 residues long: Aspartyl/glutamyl-tRNA(Asn/Gln) amidotransferase subunit B (494 aa).

The protein belongs to the GatB/GatE family. GatB subfamily. In terms of assembly, heterotrimer of A, B and C subunits.

The enzyme catalyses L-glutamyl-tRNA(Gln) + L-glutamine + ATP + H2O = L-glutaminyl-tRNA(Gln) + L-glutamate + ADP + phosphate + H(+). It catalyses the reaction L-aspartyl-tRNA(Asn) + L-glutamine + ATP + H2O = L-asparaginyl-tRNA(Asn) + L-glutamate + ADP + phosphate + 2 H(+). Functionally, allows the formation of correctly charged Asn-tRNA(Asn) or Gln-tRNA(Gln) through the transamidation of misacylated Asp-tRNA(Asn) or Glu-tRNA(Gln) in organisms which lack either or both of asparaginyl-tRNA or glutaminyl-tRNA synthetases. The reaction takes place in the presence of glutamine and ATP through an activated phospho-Asp-tRNA(Asn) or phospho-Glu-tRNA(Gln). The chain is Aspartyl/glutamyl-tRNA(Asn/Gln) amidotransferase subunit B from Rhodopseudomonas palustris (strain ATCC BAA-98 / CGA009).